The chain runs to 170 residues: tRNA-splicing endonuclease (170 aa).

Residues Y110, H116, and K147 contribute to the active site.

It belongs to the tRNA-intron endonuclease family. Archaeal short subfamily. In terms of assembly, homotetramer; although the tetramer contains four active sites, only two participate in the cleavage. Therefore, it should be considered as a dimer of dimers.

It carries out the reaction pretRNA = a 3'-half-tRNA molecule with a 5'-OH end + a 5'-half-tRNA molecule with a 2',3'-cyclic phosphate end + an intron with a 2',3'-cyclic phosphate and a 5'-hydroxyl terminus.. Its function is as follows. Endonuclease that removes tRNA introns. Cleaves pre-tRNA at the 5'- and 3'-splice sites to release the intron. The products are an intron and two tRNA half-molecules bearing 2',3' cyclic phosphate and 5'-OH termini. Recognizes a pseudosymmetric substrate in which 2 bulged loops of 3 bases are separated by a stem of 4 bp. This chain is tRNA-splicing endonuclease, found in Pyrococcus abyssi (strain GE5 / Orsay).